Here is a 190-residue protein sequence, read N- to C-terminus: uncharacterized protein (190 aa).

The Cytoplasmic portion of the chain corresponds to 1–16 (MAILPEFISQTPPVTR). The helical transmembrane segment at 17–37 (YIVLGTLFTTLAVNFGYVSDL) threads the bilayer. The Lumenal portion of the chain corresponds to 38–55 (KIFFNWKLFLAKGEYWRA). A helical transmembrane segment spans residues 56–76 (ITTFLYVGPFGLELILYLSFL). Over 77 to 98 (LRFMSMLERSSPPPQTQSFLKT) the chain is Cytoplasmic. Residues 99–119 (VLIVWFSLLVTSYFSYMPFAA) traverse the membrane as a helical segment. The Lumenal segment spans residues 120–138 (SYFSFTMLYIWSWKHPLYR). A helical membrane pass occupies residues 139 to 159 (ISILGLFDVKAPYVPWVMVLL). Topologically, residues 160–163 (RWLR) are cytoplasmic. The helical transmembrane segment at 164–184 (TGIFPLLDLISALIGHVYFFV) threads the bilayer. The Lumenal segment spans residues 185–190 (TDFSTV).

The protein belongs to the derlin family.

Its subcellular location is the endoplasmic reticulum membrane. This is an uncharacterized protein from Schizosaccharomyces pombe (strain 972 / ATCC 24843) (Fission yeast).